A 98-amino-acid polypeptide reads, in one-letter code: NADH-ubiquinone oxidoreductase chain 4L (98 aa).

The next 3 helical transmembrane spans lie at 1-21, 28-48, and 59-79; these read MMPI…GALV, STLL…ALLI, and APLI…ALLV.

This sequence belongs to the complex I subunit 4L family. In terms of assembly, core subunit of respiratory chain NADH dehydrogenase (Complex I) which is composed of 45 different subunits.

It localises to the mitochondrion inner membrane. The catalysed reaction is a ubiquinone + NADH + 5 H(+)(in) = a ubiquinol + NAD(+) + 4 H(+)(out). In terms of biological role, core subunit of the mitochondrial membrane respiratory chain NADH dehydrogenase (Complex I) which catalyzes electron transfer from NADH through the respiratory chain, using ubiquinone as an electron acceptor. Part of the enzyme membrane arm which is embedded in the lipid bilayer and involved in proton translocation. This is NADH-ubiquinone oxidoreductase chain 4L (MT-ND4L) from Distoechurus pennatus (Feather-tailed possum).